Reading from the N-terminus, the 159-residue chain is Phosphopantetheine adenylyltransferase (159 aa).

Ser-9 lines the substrate pocket. ATP-binding positions include 9–10 (SF) and His-17. The substrate site is built by Lys-41, Leu-73, and Lys-87. Residues 88–90 (GLR), Glu-98, and 122–128 (YSFLSSS) each bind ATP.

The protein belongs to the bacterial CoaD family. In terms of assembly, homohexamer. Mg(2+) is required as a cofactor.

The protein resides in the cytoplasm. The enzyme catalyses (R)-4'-phosphopantetheine + ATP + H(+) = 3'-dephospho-CoA + diphosphate. Its pathway is cofactor biosynthesis; coenzyme A biosynthesis; CoA from (R)-pantothenate: step 4/5. Functionally, reversibly transfers an adenylyl group from ATP to 4'-phosphopantetheine, yielding dephospho-CoA (dPCoA) and pyrophosphate. This chain is Phosphopantetheine adenylyltransferase, found in Streptomyces coelicolor (strain ATCC BAA-471 / A3(2) / M145).